A 207-amino-acid polypeptide reads, in one-letter code: ATP-dependent Clp protease proteolytic subunit (207 aa).

Ser111 serves as the catalytic Nucleophile. Residue His136 is part of the active site.

Belongs to the peptidase S14 family. Fourteen ClpP subunits assemble into 2 heptameric rings which stack back to back to give a disk-like structure with a central cavity, resembling the structure of eukaryotic proteasomes.

Its subcellular location is the cytoplasm. It carries out the reaction Hydrolysis of proteins to small peptides in the presence of ATP and magnesium. alpha-casein is the usual test substrate. In the absence of ATP, only oligopeptides shorter than five residues are hydrolyzed (such as succinyl-Leu-Tyr-|-NHMec, and Leu-Tyr-Leu-|-Tyr-Trp, in which cleavage of the -Tyr-|-Leu- and -Tyr-|-Trp bonds also occurs).. Functionally, cleaves peptides in various proteins in a process that requires ATP hydrolysis. Has a chymotrypsin-like activity. Plays a major role in the degradation of misfolded proteins. This is ATP-dependent Clp protease proteolytic subunit from Proteus mirabilis (strain HI4320).